The following is a 483-amino-acid chain: 1-aminocyclopropane-1-carboxylate synthase 2 (483 aa).

Lys-275 carries the post-translational modification N6-(pyridoxal phosphate)lysine.

Belongs to the class-I pyridoxal-phosphate-dependent aminotransferase family. Pyridoxal 5'-phosphate serves as cofactor.

It carries out the reaction S-adenosyl-L-methionine = 1-aminocyclopropane-1-carboxylate + S-methyl-5'-thioadenosine + H(+). The protein operates within alkene biosynthesis; ethylene biosynthesis via S-adenosyl-L-methionine; ethylene from S-adenosyl-L-methionine: step 1/2. Its function is as follows. Catalyzes the formation of 1-aminocyclopropane-1-carboxylate, a direct precursor of ethylene in higher plants. Involved in defense response by producing ethylene after pathogen infection. Involved in several phosphate deficiency-induced adaptive responses, such as lateral root elongation. This chain is 1-aminocyclopropane-1-carboxylate synthase 2, found in Oryza sativa subsp. japonica (Rice).